Here is a 554-residue protein sequence, read N- to C-terminus: MTKFVFVTGGVVSSLGKGIAAASLAAILESRGLKVTLLKLDPYINVDPGTMSPFQHGEVFVTEDGAETDLDLGHYERFVSAKMRKANNFTTGQIYESVIRKERRGEYLGKTVQVIPHITNEIQAFIERGAKASHDGKADVAIVEIGGTVGDIESLPFLEAARQMSLRLGRNQAAFVHLTLVPFIASAGELKTKPTQHSVQKLREIGVQPTALLCRADRPIPDDERAKISLFANMPQDAVISVWDVDTIYKIPQMLNEQGLDRIICEELRIDAPPADLSMWSRMVHTLENPQHEITIGMVGKYVDLTESYKSLIEALRHAGLHTSTRVNIEYIDSEELESGHTQVLESLDAILVPGGFGKRGTEGKIRAIQYAREKTVPYLGICLGMQLAVIEFARHVAGMQDANSTEFNLETEHPVVALITEWQDRDGRVEKRSADSDLGGTMRLGAQRVPVQTGTKASQIYGAEVNERHRHRYEVNNHYVPQLEKSGMIISARTPSENLPEMMELPGAMHPWFVGVQFHPEFTSTPRDGHPLFKAYVEAALAHRQRQAQRAVA.

Residues 1–270 (MTKFVFVTGG…DRIICEELRI (270 aa)) are amidoligase domain. Ser-13 contacts CTP. Position 13 (Ser-13) interacts with UTP. Residues 14–19 (SLGKGI) and Asp-71 each bind ATP. Positions 71 and 144 each coordinate Mg(2+). CTP is bound by residues 151 to 153 (DIE), 191 to 196 (KTKPTQ), and Lys-227. UTP contacts are provided by residues 191–196 (KTKPTQ) and Lys-227. Residues 295 to 547 (TIGMVGKYVD…VEAALAHRQR (253 aa)) form the Glutamine amidotransferase type-1 domain. Position 356 (Gly-356) interacts with L-glutamine. Cys-383 acts as the Nucleophile; for glutamine hydrolysis in catalysis. L-glutamine-binding positions include 384 to 387 (LGMQ), Glu-407, and Arg-473. Catalysis depends on residues His-520 and Glu-522.

The protein belongs to the CTP synthase family. Homotetramer.

The enzyme catalyses UTP + L-glutamine + ATP + H2O = CTP + L-glutamate + ADP + phosphate + 2 H(+). It carries out the reaction L-glutamine + H2O = L-glutamate + NH4(+). The catalysed reaction is UTP + NH4(+) + ATP = CTP + ADP + phosphate + 2 H(+). It functions in the pathway pyrimidine metabolism; CTP biosynthesis via de novo pathway; CTP from UDP: step 2/2. Allosterically activated by GTP, when glutamine is the substrate; GTP has no effect on the reaction when ammonia is the substrate. The allosteric effector GTP functions by stabilizing the protein conformation that binds the tetrahedral intermediate(s) formed during glutamine hydrolysis. Inhibited by the product CTP, via allosteric rather than competitive inhibition. In terms of biological role, catalyzes the ATP-dependent amination of UTP to CTP with either L-glutamine or ammonia as the source of nitrogen. Regulates intracellular CTP levels through interactions with the four ribonucleotide triphosphates. The protein is CTP synthase of Ralstonia nicotianae (strain ATCC BAA-1114 / GMI1000) (Ralstonia solanacearum).